Here is a 322-residue protein sequence, read N- to C-terminus: ATP-dependent 6-phosphofructokinase (322 aa).

G11 provides a ligand contact to ATP. ADP is bound at residue 21–25; it reads RAVVR. Residues 72 to 73 and 102 to 105 contribute to the ATP site; these read RC and GDGS. Mg(2+) is bound at residue D103. 127–129 contacts substrate; it reads TID. Residue D129 is the Proton acceptor of the active site. Residue R156 participates in ADP binding. Substrate-binding positions include R164 and 171 to 173; that span reads MGR. ADP is bound by residues 187–189, R213, and 215–217; these read GAE and KKH. Residues E224, R245, and 251–254 each bind substrate; that span reads HIQR.

The protein belongs to the phosphofructokinase type A (PFKA) family. ATP-dependent PFK group I subfamily. Prokaryotic clade 'B1' sub-subfamily. In terms of assembly, homotetramer. The cofactor is Mg(2+).

It localises to the cytoplasm. It catalyses the reaction beta-D-fructose 6-phosphate + ATP = beta-D-fructose 1,6-bisphosphate + ADP + H(+). The protein operates within carbohydrate degradation; glycolysis; D-glyceraldehyde 3-phosphate and glycerone phosphate from D-glucose: step 3/4. With respect to regulation, allosterically activated by ADP and other diphosphonucleosides, and allosterically inhibited by phosphoenolpyruvate. Catalyzes the phosphorylation of D-fructose 6-phosphate to fructose 1,6-bisphosphate by ATP, the first committing step of glycolysis. The protein is ATP-dependent 6-phosphofructokinase of Staphylococcus carnosus (strain TM300).